Here is a 312-residue protein sequence, read N- to C-terminus: Ribosomal protein L11 methyltransferase (312 aa).

Positions 160, 181, 203, and 246 each coordinate S-adenosyl-L-methionine.

Belongs to the methyltransferase superfamily. PrmA family.

It localises to the cytoplasm. It carries out the reaction L-lysyl-[protein] + 3 S-adenosyl-L-methionine = N(6),N(6),N(6)-trimethyl-L-lysyl-[protein] + 3 S-adenosyl-L-homocysteine + 3 H(+). Its function is as follows. Methylates ribosomal protein L11. This is Ribosomal protein L11 methyltransferase from Staphylococcus epidermidis (strain ATCC 12228 / FDA PCI 1200).